The following is a 1058-amino-acid chain: Carbamoyl phosphate synthase large chain (1058 aa).

A carboxyphosphate synthetic domain region spans residues 1-399 (MPIDKDIKKV…AIQKAIRSLD (399 aa)). ATP-binding residues include Arg-127, Arg-167, Gly-173, Gly-174, Glu-206, Val-208, Glu-213, Gly-239, Ile-240, His-241, Gln-282, and Glu-296. The region spanning 131–325 (GHFMDKLNEP…IAKISSKIAL (195 aa)) is the ATP-grasp 1 domain. Residues Gln-282, Glu-296, and Asn-298 each coordinate Mg(2+). Residues Gln-282, Glu-296, and Asn-298 each contribute to the Mn(2+) site. The interval 400-538 (MGHDGFEYVE…YSTYDSGNEL (139 aa)) is oligomerization domain. A carbamoyl phosphate synthetic domain region spans residues 539–924 (KSSNKKKIVI…YKSQLAAGMD (386 aa)). Residues 663–856 (AKLLNKLHIH…LAKVATWIMT (194 aa)) enclose the ATP-grasp 2 domain. ATP is bound by residues Arg-699, Lys-738, Leu-740, Glu-745, Gly-770, Val-771, His-772, Ser-773, Gln-813, and Glu-827. Gln-813, Glu-827, and Asn-829 together coordinate Mg(2+). Positions 813, 827, and 829 each coordinate Mn(2+). One can recognise an MGS-like domain in the interval 923-1058 (MDLPKEGKIF…KSLNEHIDGE (136 aa)). The allosteric domain stretch occupies residues 925 to 1058 (LPKEGKIFIS…KSLNEHIDGE (134 aa)).

It belongs to the CarB family. Composed of two chains; the small (or glutamine) chain promotes the hydrolysis of glutamine to ammonia, which is used by the large (or ammonia) chain to synthesize carbamoyl phosphate. Tetramer of heterodimers (alpha,beta)4. The cofactor is Mg(2+). Mn(2+) serves as cofactor.

It carries out the reaction hydrogencarbonate + L-glutamine + 2 ATP + H2O = carbamoyl phosphate + L-glutamate + 2 ADP + phosphate + 2 H(+). The enzyme catalyses hydrogencarbonate + NH4(+) + 2 ATP = carbamoyl phosphate + 2 ADP + phosphate + 2 H(+). It participates in amino-acid biosynthesis; L-arginine biosynthesis; carbamoyl phosphate from bicarbonate: step 1/1. It functions in the pathway pyrimidine metabolism; UMP biosynthesis via de novo pathway; (S)-dihydroorotate from bicarbonate: step 1/3. Large subunit of the glutamine-dependent carbamoyl phosphate synthetase (CPSase). CPSase catalyzes the formation of carbamoyl phosphate from the ammonia moiety of glutamine, carbonate, and phosphate donated by ATP, constituting the first step of 2 biosynthetic pathways, one leading to arginine and/or urea and the other to pyrimidine nucleotides. The large subunit (synthetase) binds the substrates ammonia (free or transferred from glutamine from the small subunit), hydrogencarbonate and ATP and carries out an ATP-coupled ligase reaction, activating hydrogencarbonate by forming carboxy phosphate which reacts with ammonia to form carbamoyl phosphate. This chain is Carbamoyl phosphate synthase large chain, found in Methanobrevibacter smithii (strain ATCC 35061 / DSM 861 / OCM 144 / PS).